The following is a 576-amino-acid chain: Glucoamylase ARB_02327-1 (576 aa).

An N-terminal signal peptide occupies residues 1 to 20; it reads MGLASTVSLALLGLCSLARA. Trp-141 serves as a coordination point for substrate. N-linked (GlcNAc...) asparagine glycans are attached at residues Asn-168 and Asn-192. Asp-197 functions as the Proton acceptor in the catalytic mechanism. Glu-200 acts as the Proton donor in catalysis. 2 disulfide bridges follow: Cys-243–Cys-470 and Cys-285–Cys-293. Positions 477-576 constitute a CBM20 domain; sequence GSGGDTVAVT…GSFTQNDTWR (100 aa). Residues 552–576 form a disordered region; it reads TWESDPNRSITTSASGSFTQNDTWR. Residues Asn-558 and Asn-572 are each glycosylated (N-linked (GlcNAc...) asparagine).

Belongs to the glycosyl hydrolase 15 family.

It localises to the secreted. The enzyme catalyses Hydrolysis of terminal (1-&gt;4)-linked alpha-D-glucose residues successively from non-reducing ends of the chains with release of beta-D-glucose.. In Schizophyllum commune (strain H4-8 / FGSC 9210) (Split gill fungus), this protein is Glucoamylase ARB_02327-1.